The following is a 906-amino-acid chain: Protein translocase subunit SecA (906 aa).

Residues Gln-86, 104–108, and Asp-499 each bind ATP; that span reads GEGKT. A disordered region spans residues 862–886; that stretch reads KPVVSRIDPKDRNPDDPTSWGRVSR. Zn(2+) is bound by residues Cys-890, Cys-892, Cys-901, and His-902.

The protein belongs to the SecA family. In terms of assembly, monomer and homodimer. Part of the essential Sec protein translocation apparatus which comprises SecA, SecYEG and auxiliary proteins SecDF-YajC and YidC. It depends on Zn(2+) as a cofactor.

The protein localises to the cell inner membrane. Its subcellular location is the cytoplasm. The enzyme catalyses ATP + H2O + cellular proteinSide 1 = ADP + phosphate + cellular proteinSide 2.. Its function is as follows. Part of the Sec protein translocase complex. Interacts with the SecYEG preprotein conducting channel. Has a central role in coupling the hydrolysis of ATP to the transfer of proteins into and across the cell membrane, serving both as a receptor for the preprotein-SecB complex and as an ATP-driven molecular motor driving the stepwise translocation of polypeptide chains across the membrane. The chain is Protein translocase subunit SecA from Rickettsia africae (strain ESF-5).